The following is a 229-amino-acid chain: uncharacterized protein (229 aa).

Positions 24–78 (LRKWRSIFNASQSDLARKLGISPSVISDYESGRRKPGTAFLKKFVCALIELDGER) constitute an HTH cro/C1-type domain. Residues 35–54 (QSDLARKLGISPSVISDYES) constitute a DNA-binding region (H-T-H motif).

This is an uncharacterized protein from Archaeoglobus fulgidus (strain ATCC 49558 / DSM 4304 / JCM 9628 / NBRC 100126 / VC-16).